The sequence spans 547 residues: Vacuolar fusion protein MON1 homolog B (547 aa).

At M1 the chain carries N-acetylmethionine. Residues 1-106 are disordered; it reads MEAGGDTAAP…GGDPSDEEWR (106 aa). Positions 57 to 66 are enriched in pro residues; the sequence is PPSPSPPPQS. 2 positions are modified to phosphoserine: S59 and S61.

This sequence belongs to the MON1/SAND family. Interacts with CCNT2; down-regulates CCNT2-mediated activation of viral promoters during herpes simplex virus 1/HHV-1 infection. Found in a complex with RMC1, CCZ1 MON1A and MON1B.

The sequence is that of Vacuolar fusion protein MON1 homolog B (MON1B) from Macaca fascicularis (Crab-eating macaque).